The primary structure comprises 184 residues: GTP cyclohydrolase 1 (184 aa).

Zn(2+) contacts are provided by Cys-75, His-78, and Cys-146.

Belongs to the GTP cyclohydrolase I family. Homomer.

It carries out the reaction GTP + H2O = 7,8-dihydroneopterin 3'-triphosphate + formate + H(+). Its pathway is cofactor biosynthesis; 7,8-dihydroneopterin triphosphate biosynthesis; 7,8-dihydroneopterin triphosphate from GTP: step 1/1. This chain is GTP cyclohydrolase 1, found in Coxiella burnetii (strain Dugway 5J108-111).